The following is a 294-amino-acid chain: MQARFHTSWAELPASLQFALEPILSAENFPAMLTAEQVKTVKNISGLDDDALAFALLPLATACALTPISHFNVGAIARGKSGNFYFGANMEFRGVPLQQTIHAEQCAVTHAWLRGETNLVAITVNYTPCGHCRQFMNELNSGSELHIHLPGRPPSTLGQYLPDSFGPTDLAITTLLMDPVNHGYTLAETDPLTQAALNAANHSHAPYSQSHSGVALETTNGKIYAGRYAENAAFNPSLPPLQAALILANITGENCASIRRAVLVEGHNAVTSQWDTTLATLNALGCSAVKRVTF.

2 consecutive CMP/dCMP-type deaminase domains span residues 48 to 168 (DDDA…FGPT) and 187 to 294 (AETD…RVTF). 89-91 (NME) contacts substrate. H102 contacts Zn(2+). E104 acts as the Proton donor in catalysis. The Zn(2+) site is built by C129 and C132.

It belongs to the cytidine and deoxycytidylate deaminase family. As to quaternary structure, homodimer. Requires Zn(2+) as cofactor.

The enzyme catalyses cytidine + H2O + H(+) = uridine + NH4(+). It catalyses the reaction 2'-deoxycytidine + H2O + H(+) = 2'-deoxyuridine + NH4(+). This enzyme scavenges exogenous and endogenous cytidine and 2'-deoxycytidine for UMP synthesis. The sequence is that of Cytidine deaminase from Yersinia pseudotuberculosis serotype O:1b (strain IP 31758).